The following is a 942-amino-acid chain: Exopolysaccharide phosphotransferase SCO2592 (942 aa).

The protein belongs to the stealth family.

The protein is Exopolysaccharide phosphotransferase SCO2592 of Streptomyces coelicolor (strain ATCC BAA-471 / A3(2) / M145).